Consider the following 411-residue polypeptide: Tyrosine--tRNA ligase (411 aa).

Residue Tyr-34 participates in L-tyrosine binding. Positions Cys-39–Ser-48 match the 'HIGH' region motif. L-tyrosine-binding residues include Tyr-171 and Gln-175. The 'KMSKS' region signature appears at Lys-231–Thr-235. Residue Lys-234 coordinates ATP. The region spanning Ile-345–Val-411 is the S4 RNA-binding domain.

The protein belongs to the class-I aminoacyl-tRNA synthetase family. TyrS type 1 subfamily. As to quaternary structure, homodimer.

The protein localises to the cytoplasm. It carries out the reaction tRNA(Tyr) + L-tyrosine + ATP = L-tyrosyl-tRNA(Tyr) + AMP + diphosphate + H(+). Catalyzes the attachment of tyrosine to tRNA(Tyr) in a two-step reaction: tyrosine is first activated by ATP to form Tyr-AMP and then transferred to the acceptor end of tRNA(Tyr). The chain is Tyrosine--tRNA ligase from Rickettsia typhi (strain ATCC VR-144 / Wilmington).